The sequence spans 689 residues: Homoaconitase, mitochondrial (689 aa).

A mitochondrion-targeting transit peptide spans 1–17; it reads MVVLRRSFHVYTRLQRG. [4Fe-4S] cluster is bound by residues cysteine 336, cysteine 403, and cysteine 406.

The protein belongs to the aconitase/IPM isomerase family. Requires [4Fe-4S] cluster as cofactor.

The protein localises to the mitochondrion. It carries out the reaction (2R,3S)-homoisocitrate = cis-homoaconitate + H2O. Its pathway is amino-acid biosynthesis; L-lysine biosynthesis via AAA pathway; L-alpha-aminoadipate from 2-oxoglutarate: step 3/5. In terms of biological role, catalyzes the reversible hydration of cis-homoaconitate to (2R,3S)-homoisocitrate, a step in the alpha-aminoadipate pathway for lysine biosynthesis. This is Homoaconitase, mitochondrial (LYS4) from Candida glabrata (strain ATCC 2001 / BCRC 20586 / JCM 3761 / NBRC 0622 / NRRL Y-65 / CBS 138) (Yeast).